Consider the following 343-residue polypeptide: Protein RecA (343 aa).

65-72 (GPESSGKT) provides a ligand contact to ATP.

It belongs to the RecA family.

It is found in the cytoplasm. In terms of biological role, can catalyze the hydrolysis of ATP in the presence of single-stranded DNA, the ATP-dependent uptake of single-stranded DNA by duplex DNA, and the ATP-dependent hybridization of homologous single-stranded DNAs. It interacts with LexA causing its activation and leading to its autocatalytic cleavage. The chain is Protein RecA from Xanthomonas campestris pv. campestris (strain 8004).